The chain runs to 150 residues: 3-hydroxyacyl-[acyl-carrier-protein] dehydratase FabZ (150 aa).

His-51 is a catalytic residue.

The protein belongs to the thioester dehydratase family. FabZ subfamily.

It localises to the cytoplasm. The enzyme catalyses a (3R)-hydroxyacyl-[ACP] = a (2E)-enoyl-[ACP] + H2O. Functionally, involved in unsaturated fatty acids biosynthesis. Catalyzes the dehydration of short chain beta-hydroxyacyl-ACPs and long chain saturated and unsaturated beta-hydroxyacyl-ACPs. This chain is 3-hydroxyacyl-[acyl-carrier-protein] dehydratase FabZ, found in Geobacter sulfurreducens (strain ATCC 51573 / DSM 12127 / PCA).